Consider the following 172-residue polypeptide: Large ribosomal subunit protein uL10 (172 aa).

Belongs to the universal ribosomal protein uL10 family. In terms of assembly, part of the ribosomal stalk of the 50S ribosomal subunit. The N-terminus interacts with L11 and the large rRNA to form the base of the stalk. The C-terminus forms an elongated spine to which L12 dimers bind in a sequential fashion forming a multimeric L10(L12)X complex.

Forms part of the ribosomal stalk, playing a central role in the interaction of the ribosome with GTP-bound translation factors. This chain is Large ribosomal subunit protein uL10, found in Afipia carboxidovorans (strain ATCC 49405 / DSM 1227 / KCTC 32145 / OM5) (Oligotropha carboxidovorans).